Here is a 491-residue protein sequence, read N- to C-terminus: E3 ubiquitin-protein ligase Hakai (491 aa).

Residues 1–61 are disordered; sequence MDHTDNELQG…PAKAPPGDEE (61 aa). An RING-type zinc finger spans residues 109 to 149; that stretch reads CDKCGLPIKIYGRMIPCKHVFCYDCAILHEKKGDKMCPGCS. Residues 148–206 form an HYB domain region; it reads CSDPVQRIEQCTRGSLFMCSIVQGCKRTYLSQRDLQAHINHRHMRAGKPVTRASLENVH. Residues 164–190 form a C2H2-type zinc finger; it reads FMCSIVQGCKRTYLSQRDLQAHINHRH. Residues serine 201, serine 285, and serine 290 each carry the phosphoserine modification. Residues 255–491 form a disordered region; the sequence is QPHEDIRAPP…DQTRYRPYYQ (237 aa). 3 stretches are compositionally biased toward pro residues: residues 342–359, 372–389, and 399–423; these read APPP…PHPP, APPP…PPPG, and MNHP…PPHH. Residues 427 to 442 show a composition bias toward polar residues; it reads NSLPQFTEDQGTLSPP. Pro residues predominate over residues 457 to 478; sequence PRGPPPPPRLQGPPSQTPLPGP.

It belongs to the Hakai family. Homodimer. Interacts with tyrosine-phosphorylated SRC substrates. Component of the WMM complex, a N6-methyltransferase complex composed of a catalytic subcomplex, named MAC, and of an associated subcomplex, named MACOM. The MAC subcomplex is composed of METTL3 and METTL14. The MACOM subcomplex is composed of WTAP, ZC3H13, CBLL1/HAKAI, VIRMA, and, in some cases of RBM15 (RBM15 or RBM15B). Also a component of a MACOM-like complex, named WTAP complex, composed of WTAP, ZC3H13, CBLL1, VIRMA, RBM15, BCLAF1 and THRAP3. Phosphorylated on tyrosine residues.

Its subcellular location is the nucleus speckle. It localises to the nucleus. The protein localises to the nucleoplasm. It is found in the cytoplasm. The enzyme catalyses S-ubiquitinyl-[E2 ubiquitin-conjugating enzyme]-L-cysteine + [acceptor protein]-L-lysine = [E2 ubiquitin-conjugating enzyme]-L-cysteine + N(6)-ubiquitinyl-[acceptor protein]-L-lysine.. The protein operates within protein modification; protein ubiquitination. Its function is as follows. E3 ubiquitin-protein ligase that mediates ubiquitination of several tyrosine-phosphorylated Src substrates, including CDH1, CTTN and DOK1. Targets CDH1 for endocytosis and degradation. Associated component of the WMM complex, a complex that mediates N6-methyladenosine (m6A) methylation of RNAs, a modification that plays a role in the efficiency of mRNA splicing and RNA processing. Its function in the WMM complex is unknown. The chain is E3 ubiquitin-protein ligase Hakai from Homo sapiens (Human).